The chain runs to 372 residues: Putative glutamate--cysteine ligase 2 (372 aa).

Belongs to the glutamate--cysteine ligase type 2 family. YbdK subfamily. Homodimer.

The catalysed reaction is L-cysteine + L-glutamate + ATP = gamma-L-glutamyl-L-cysteine + ADP + phosphate + H(+). Functionally, ATP-dependent carboxylate-amine ligase which exhibits weak glutamate--cysteine ligase activity. The polypeptide is Putative glutamate--cysteine ligase 2 (ybdK) (Salmonella paratyphi A (strain AKU_12601)).